A 640-amino-acid polypeptide reads, in one-letter code: Threonine--tRNA ligase (640 aa).

The tract at residues 224-525 (DHRKLGKELD…LTEHYAGAFP (302 aa)) is catalytic. Positions 323, 374, and 502 each coordinate Zn(2+).

The protein belongs to the class-II aminoacyl-tRNA synthetase family. In terms of assembly, homodimer. Zn(2+) serves as cofactor.

It localises to the cytoplasm. The enzyme catalyses tRNA(Thr) + L-threonine + ATP = L-threonyl-tRNA(Thr) + AMP + diphosphate + H(+). Functionally, catalyzes the attachment of threonine to tRNA(Thr) in a two-step reaction: L-threonine is first activated by ATP to form Thr-AMP and then transferred to the acceptor end of tRNA(Thr). Also edits incorrectly charged L-seryl-tRNA(Thr). The chain is Threonine--tRNA ligase from Tropheryma whipplei (strain Twist) (Whipple's bacillus).